Here is a 103-residue protein sequence, read N- to C-terminus: A-type ATP synthase subunit F (103 aa).

This sequence belongs to the V-ATPase F subunit family. Has multiple subunits with at least A(3), B(3), C, D, E, F, H, I and proteolipid K(x).

The protein resides in the cell membrane. Component of the A-type ATP synthase that produces ATP from ADP in the presence of a proton gradient across the membrane. The chain is A-type ATP synthase subunit F from Pyrococcus abyssi (strain GE5 / Orsay).